The following is a 710-amino-acid chain: Polyribonucleotide nucleotidyltransferase (710 aa).

Positions 487 and 493 each coordinate Mg(2+). A KH domain is found at 554 to 613 (PKIITMTINPDKIRDVIGPSGKQINKIIEETGVKIDIEQDGTVFISSIDQQMNEKAKKII). The region spanning 623-691 (GEIYLGKVKR…KQGRVNLSRK (69 aa)) is the S1 motif domain.

It belongs to the polyribonucleotide nucleotidyltransferase family. The cofactor is Mg(2+).

The protein localises to the cytoplasm. It catalyses the reaction RNA(n+1) + phosphate = RNA(n) + a ribonucleoside 5'-diphosphate. Involved in mRNA degradation. Catalyzes the phosphorolysis of single-stranded polyribonucleotides processively in the 3'- to 5'-direction. This Bacillus cytotoxicus (strain DSM 22905 / CIP 110041 / 391-98 / NVH 391-98) protein is Polyribonucleotide nucleotidyltransferase.